The following is a 203-amino-acid chain: Probable Tat proofreading chaperone DmsD (203 aa).

The protein belongs to the TorD/DmsD family. DmsD subfamily.

Its function is as follows. Required for biogenesis/assembly of DMSO reductase, but not for the interaction of the DmsA signal peptide with the Tat system. May be part of a chaperone cascade complex that facilitates a folding-maturation pathway for the substrate protein. The chain is Probable Tat proofreading chaperone DmsD from Haemophilus influenzae (strain ATCC 51907 / DSM 11121 / KW20 / Rd).